The chain runs to 213 residues: Tellurium resistance protein TerX (213 aa).

It belongs to the CAPAB/TerDEXZ family.

Its function is as follows. Not known; seems to contribute to the tellurium resistance (Ter) mechanism. Also involved in phage inhibition (Phi) and colicin resistance (PacB). This chain is Tellurium resistance protein TerX (terX), found in Serratia marcescens.